Consider the following 366-residue polypeptide: CRS2-associated factor 2, mitochondrial (366 aa).

The transit peptide at 1 to 14 (MLLPRDLLLLPWRR) directs the protein to the mitochondrion. The interval 24–82 (RRLNHHRAPPFSDPDDDPPFTRLAERPPRAPSKKKKKEEEDQGGRIRPPEPASSDLPFD) is disordered. Residues 60–71 (KEEEDQGGRIRP) show a composition bias toward basic and acidic residues. CRM domains are found at residues 143 to 241 (EPLA…QRPQ) and 263 to 359 (DGLT…SVSL).

In terms of assembly, part of large ribonucleo-protein complexes that include group IIB introns.

Its subcellular location is the mitochondrion. In terms of biological role, may be involved in the splicing of group IIB introns in mitochondria. This Oryza sativa subsp. japonica (Rice) protein is CRS2-associated factor 2, mitochondrial.